We begin with the raw amino-acid sequence, 415 residues long: Gamma-glutamyl phosphate reductase (415 aa).

It belongs to the gamma-glutamyl phosphate reductase family.

Its subcellular location is the cytoplasm. The enzyme catalyses L-glutamate 5-semialdehyde + phosphate + NADP(+) = L-glutamyl 5-phosphate + NADPH + H(+). The protein operates within amino-acid biosynthesis; L-proline biosynthesis; L-glutamate 5-semialdehyde from L-glutamate: step 2/2. Its function is as follows. Catalyzes the NADPH-dependent reduction of L-glutamate 5-phosphate into L-glutamate 5-semialdehyde and phosphate. The product spontaneously undergoes cyclization to form 1-pyrroline-5-carboxylate. The chain is Gamma-glutamyl phosphate reductase from Listeria innocua serovar 6a (strain ATCC BAA-680 / CLIP 11262).